Consider the following 276-residue polypeptide: Halorhodopsin (276 aa).

A propeptide spanning residues 1 to 21 (MTAVSTTATTVLQATQSDVLQ) is cleaved from the precursor. The Extracellular portion of the chain corresponds to 22–25 (EIQS). Residues 26–51 (NFLLNSSIWVNIALAGVVILLFVAMG) traverse the membrane as a helical segment. Residues 52–57 (RDLESP) are Cytoplasmic-facing. The chain crosses the membrane as a helical span at residues 58–81 (RAKLIWVATMLVPLVSISSYAGLA). The Extracellular portion of the chain corresponds to 82–105 (SGLTVGFLQMPPGHALAGQEVLSP). The chain crosses the membrane as a helical span at residues 106 to 127 (WGRYLTWTFSTPMILLALGLLA). At 128–130 (DTD) the chain is on the cytoplasmic side. A helical membrane pass occupies residues 131–154 (IASLFTAITMDIGMCVTGLAAALI). Topologically, residues 155 to 157 (TSS) are extracellular. Residues 158-180 (HLLRWVFYGISCAFFVAVLYVLL) traverse the membrane as a helical segment. Residues 181 to 192 (VQWPADAEAAGT) lie on the Cytoplasmic side of the membrane. The helical transmembrane segment at 193–216 (SEIFGTLKILTVVLWLGYPILWAL) threads the bilayer. Topologically, residues 217 to 225 (GSEGVALLS) are extracellular. The chain crosses the membrane as a helical span at residues 226 to 254 (VGVTSWGYSGLDILAKYVFAFLLLRWVAA). Position 241 is an N6-(retinylidene)lysine (Lys-241). At 255–276 (NEGTVSGSGMGIGSGGAAPADD) the chain is on the cytoplasmic side.

The protein belongs to the archaeal/bacterial/fungal opsin family.

The protein localises to the cell membrane. Light-driven anion pump. This Halobacterium halobium (strain shark) protein is Halorhodopsin.